The chain runs to 343 residues: Mitochondrial import inner membrane translocase subunit TIM50-A (343 aa).

Topologically, residues 1 to 57 are mitochondrial matrix; it reads MHKIVWFGTLNKSIGYIGKKKTCLLSPCEKICLNSARKTVQRCDKNYSPPKLRRIKN. A helical membrane pass occupies residues 58-77; it reads FYTYSVVLGSLFSIVMWAIY. Residues 78 to 343 are Mitochondrial intermembrane-facing; the sequence is KLGKPEEDHR…GRSLRGSSIK (266 aa). Residues 135–278 enclose the FCP1 homology domain; it reads YIQPPYSLVL…FDLTAFLQLI (144 aa).

The protein belongs to the TIM50 family. As to quaternary structure, component of the TIM23 complex at least composed of Tim23, Tim17 (Tim17a1, Tim17a2 or Tim17b1) and a Tim50. In terms of tissue distribution, exclusively expressed in the testis.

The protein resides in the mitochondrion inner membrane. In terms of biological role, essential component of the TIM23 complex, a complex that mediates the translocation of transit peptide-containing proteins across the mitochondrial inner membrane. The sequence is that of Mitochondrial import inner membrane translocase subunit TIM50-A (ttm3) from Drosophila melanogaster (Fruit fly).